The sequence spans 112 residues: Gastrula zinc finger protein XlCGF16.1 (112 aa).

4 consecutive C2H2-type zinc fingers follow at residues 6 to 28 (YNCS…QKTH), 34 to 56 (FVCF…QRIH), 62 to 84 (FSCT…HKTH), and 90 to 112 (FLCF…HRTH).

It belongs to the krueppel C2H2-type zinc-finger protein family.

It localises to the nucleus. Functionally, may be involved in transcriptional regulation. The chain is Gastrula zinc finger protein XlCGF16.1 from Xenopus laevis (African clawed frog).